We begin with the raw amino-acid sequence, 842 residues long: Leucine--tRNA ligase (842 aa).

Residues 44 to 55 (PYPSANGLHVGH) carry the 'HIGH' region motif. Positions 619–623 (KMSKS) match the 'KMSKS' region motif. Lysine 622 is a binding site for ATP.

This sequence belongs to the class-I aminoacyl-tRNA synthetase family.

It is found in the cytoplasm. It carries out the reaction tRNA(Leu) + L-leucine + ATP = L-leucyl-tRNA(Leu) + AMP + diphosphate. The sequence is that of Leucine--tRNA ligase from Borrelia turicatae (strain 91E135).